A 65-amino-acid polypeptide reads, in one-letter code: MPKMKTNRGAAKRFRKTASGRFKSKQSHLRHILTKKSSKRKRHLRGKKLAHVADTALIQRMLPYV.

The disordered stretch occupies residues 1-30 (MPKMKTNRGAAKRFRKTASGRFKSKQSHLR). Residues 10-30 (AAKRFRKTASGRFKSKQSHLR) show a composition bias toward basic residues.

This sequence belongs to the bacterial ribosomal protein bL35 family.

This chain is Large ribosomal subunit protein bL35, found in Pseudoalteromonas atlantica (strain T6c / ATCC BAA-1087).